Consider the following 306-residue polypeptide: Beta-lactamase (306 aa).

A signal peptide (tat-type signal) is located at residues 1-34 (MDRTTARPNRRAVLATGVGAALAATAAAAGPAHA). The active-site Acyl-ester intermediate is S82. 250-252 (KTG) provides a ligand contact to substrate.

It belongs to the class-A beta-lactamase family. Post-translationally, predicted to be exported by the Tat system. The position of the signal peptide cleavage has not been experimentally proven.

The catalysed reaction is a beta-lactam + H2O = a substituted beta-amino acid. This chain is Beta-lactamase (blaF), found in Streptomyces fradiae (Streptomyces roseoflavus).